The sequence spans 159 residues: MSDEEHQFESKADAGASKTYPQQAGTIRKNGYIVIKGRPCKVVEVSTSKTGKHGHAKCHFVAIDIFTGKKLEDIVPSSHNCDVPHVNRTDYQLIDISEDGFVSLLTDNGNTKDDLRLPTDENLLSLIKDGFAEGKDLVVSVMSAMGEEQINALKDIGPK.

Over residues 1–12 (MSDEEHQFESKA) the composition is skewed to basic and acidic residues. The tract at residues 1 to 21 (MSDEEHQFESKADAGASKTYP) is disordered. Lys-52 carries the post-translational modification Hypusine.

This sequence belongs to the eIF-5A family. Lys-52 undergoes hypusination, a unique post-translational modification that consists in the addition of a butylamino group from spermidine to lysine side chain, leading to the formation of the unusual amino acid hypusine. eIF-5As are the only known proteins to undergo this modification, which is essential for their function.

Functionally, translation factor that promotes translation elongation and termination, particularly upon ribosome stalling at specific amino acid sequence contexts. Binds between the exit (E) and peptidyl (P) site of the ribosome and promotes rescue of stalled ribosome: specifically required for efficient translation of polyproline-containing peptides as well as other motifs that stall the ribosome. Acts as a ribosome quality control (RQC) cofactor by joining the RQC complex to facilitate peptidyl transfer during CAT tailing step. This chain is Eukaryotic translation initiation factor 5A-3, found in Solanum lycopersicum (Tomato).